A 514-amino-acid polypeptide reads, in one-letter code: Extracellular exo-inulinase (514 aa).

Residues 1–18 (MRAFLALIFLTFVMNVES) form the signal peptide. Residues 33–34 (ND) and Gln-52 contribute to the substrate site. Asp-34 functions as the Nucleophile in the catalytic mechanism. An N-linked (GlcNAc...) asparagine glycan is attached at Asn-56. Positions 60 and 95 each coordinate substrate. 2 N-linked (GlcNAc...) asparagine glycosylation sites follow: Asn-104 and Asn-110. Substrate is bound at residue 162-163 (RD). N-linked (GlcNAc...) asparagine glycans are attached at residues Asn-197 and Asn-203. Substrate contacts are provided by Glu-214 and Trp-300. Residue Glu-214 is the Proton donor/acceptor of the active site. 4 N-linked (GlcNAc...) asparagine glycosylation sites follow: Asn-357, Asn-371, Asn-389, and Asn-422.

This sequence belongs to the glycosyl hydrolase 32 family.

The protein localises to the secreted. The catalysed reaction is Hydrolysis of terminal, non-reducing (2-&gt;1)- and (2-&gt;6)-linked beta-D-fructofuranose residues in fructans.. Its function is as follows. Exo-inulinase involved in utilization of the plant storage polymer inulin, consisting of fructooligosaccharides with a degree of polymerization (DP) value from 2 to 60. Splits off terminal fructose units successively from the non-reducing end of the inulin molecule. The sequence is that of Extracellular exo-inulinase from Meyerozyma guilliermondii (strain ATCC 6260 / CBS 566 / DSM 6381 / JCM 1539 / NBRC 10279 / NRRL Y-324) (Yeast).